Consider the following 884-residue polypeptide: Translation initiation factor IF-2 (884 aa).

The disordered stretch occupies residues 58–248 (PEKVEQKRVR…GKTESVETEE (191 aa)). Basic residues predominate over residues 66–77 (VRSNVIRKRRQP). The segment covering 87 to 106 (EAPAAQAPEAEEVTAPTAEE) has biased composition (low complexity). Residues 172 to 183 (SRKKAKAKKHQA) are compositionally biased toward basic residues. Residues 207–223 (DTAPADSPAAPAAATPA) show a composition bias toward low complexity. Basic residues predominate over residues 229 to 239 (KPSRKDRKKRG). Positions 384–553 (KRAPVVTIMG…LLQAEMLELK (170 aa)) constitute a tr-type G domain. Residues 393–400 (GHVDHGKT) are G1. 393–400 (GHVDHGKT) provides a ligand contact to GTP. Residues 418-422 (GITQH) are G2. A G3 region spans residues 439–442 (DTPG). Residues 439–443 (DTPGH) and 493–496 (NKID) each bind GTP. The tract at residues 493–496 (NKID) is G4. Positions 529-531 (SAK) are G5.

It belongs to the TRAFAC class translation factor GTPase superfamily. Classic translation factor GTPase family. IF-2 subfamily.

It localises to the cytoplasm. Functionally, one of the essential components for the initiation of protein synthesis. Protects formylmethionyl-tRNA from spontaneous hydrolysis and promotes its binding to the 30S ribosomal subunits. Also involved in the hydrolysis of GTP during the formation of the 70S ribosomal complex. This is Translation initiation factor IF-2 from Desulfosudis oleivorans (strain DSM 6200 / JCM 39069 / Hxd3) (Desulfococcus oleovorans).